Consider the following 83-residue polypeptide: Small proline-rich protein 2A3 (83 aa).

A run of 5 repeats spans residues 21–29, 30–38, 39–47, 48–56, and 57–65. Residues 21-65 are 5 X 9 AA approximate tandem repeats; the sequence is PKCPEPCPPQVWPGPCRPVMCFEPCLPSVWPGPCRPVVCYEQCPP.

The protein belongs to the cornifin (SPRR) family. In terms of processing, forms five pairs of intrachain disulfide bonds.

It is found in the secreted. Its subcellular location is the extracellular space. The protein localises to the cytoplasmic vesicle. The protein resides in the secretory vesicle. Gut bactericidal protein that selectively kills Gram-positive bacteria by binding to negatively charged lipids on bacterial membranes, leading to bacterial membrane permeabilization and disruption. Specifically binds lipids bearing negatively charged headgroups, such as phosphatidic acid, phosphatidylserine (PS), cardiolipin (CL), and phosphatidylinositol phosphates, but not to zwitterionic or neutral lipids. Induced by type-2 cytokines in response to helminth infection and is required to protect against helminth-induced bacterial invasion of intestinal tissue. May also be involved in the development of the cornified envelope of squamous epithelia; however, additional evidences are required to confirm this result in vivo. The polypeptide is Small proline-rich protein 2A3 (Mus musculus (Mouse)).